The sequence spans 1178 residues: DNA-directed RNA polymerase subunit beta (1178 aa).

A disordered region spans residues Met-1–Asn-37. The span at Ser-18–Pro-33 shows a compositional bias: low complexity.

The protein belongs to the RNA polymerase beta chain family. In terms of assembly, the RNAP catalytic core consists of 2 alpha, 1 beta, 1 beta' and 1 omega subunit. When a sigma factor is associated with the core the holoenzyme is formed, which can initiate transcription.

The catalysed reaction is RNA(n) + a ribonucleoside 5'-triphosphate = RNA(n+1) + diphosphate. Its function is as follows. DNA-dependent RNA polymerase catalyzes the transcription of DNA into RNA using the four ribonucleoside triphosphates as substrates. This chain is DNA-directed RNA polymerase subunit beta, found in Mycobacterium tuberculosis (strain CDC 1551 / Oshkosh).